A 369-amino-acid chain; its full sequence is Transmembrane protein 144 homolog A (369 aa).

10 consecutive transmembrane segments (helical) span residues 6-26 (VIGY…YVPV), 35-55 (LSYA…AMMI), 63-83 (PIGI…IPII), 85-105 (LVGL…VGFF), 122-142 (DWMN…FFFI), 221-241 (VAGI…MIPM), 256-276 (IIFS…MFYA), 288-308 (TVFP…GLMI), 318-338 (GYPI…VFYF), and 347-367 (LLIL…LAFS).

It belongs to the TMEM144 family.

The protein localises to the membrane. This is Transmembrane protein 144 homolog A (tmem144A) from Dictyostelium discoideum (Social amoeba).